A 271-amino-acid polypeptide reads, in one-letter code: Tropinone reductase homolog At2g29360 (271 aa).

Residue 22–46 (LVTGGSKGIGEAVVEELATLGARIH) participates in NADP(+) binding. S155 provides a ligand contact to substrate. The active-site Proton acceptor is the Y168.

This sequence belongs to the short-chain dehydrogenases/reductases (SDR) family. SDR65C subfamily.

Oxidoreductase active on cyclic ketones, but not on tropinone or nortropinone. The sequence is that of Tropinone reductase homolog At2g29360 from Arabidopsis thaliana (Mouse-ear cress).